A 345-amino-acid chain; its full sequence is Heat-inducible transcription repressor HrcA (345 aa).

It belongs to the HrcA family.

Its function is as follows. Negative regulator of class I heat shock genes (grpE-dnaK-dnaJ and groELS operons). Prevents heat-shock induction of these operons. In Desulfitobacterium hafniense (strain DSM 10664 / DCB-2), this protein is Heat-inducible transcription repressor HrcA.